An 86-amino-acid chain; its full sequence is Putative membrane protein insertion efficiency factor (86 aa).

It belongs to the UPF0161 family.

The protein resides in the cell inner membrane. Could be involved in insertion of integral membrane proteins into the membrane. This chain is Putative membrane protein insertion efficiency factor, found in Pseudomonas aeruginosa (strain LESB58).